Reading from the N-terminus, the 171-residue chain is Putative F-box protein At1g32020 (171 aa).

The region spanning 3–49 (CDRISTLPDHLVAKIVSYLGIKDSIKTSVLSKRWEFVWLKVVGLDLK) is the F-box domain.

The chain is Putative F-box protein At1g32020 from Arabidopsis thaliana (Mouse-ear cress).